The primary structure comprises 318 residues: Homoserine kinase (318 aa).

Proline 97–cysteine 107 contributes to the ATP binding site.

This sequence belongs to the GHMP kinase family. Homoserine kinase subfamily.

It is found in the cytoplasm. It catalyses the reaction L-homoserine + ATP = O-phospho-L-homoserine + ADP + H(+). Its pathway is amino-acid biosynthesis; L-threonine biosynthesis; L-threonine from L-aspartate: step 4/5. In terms of biological role, catalyzes the ATP-dependent phosphorylation of L-homoserine to L-homoserine phosphate. This is Homoserine kinase from Vibrio atlanticus (strain LGP32) (Vibrio splendidus (strain Mel32)).